A 318-amino-acid chain; its full sequence is Malate dehydrogenase (318 aa).

Residues 10–15 (GGGQIG) and D34 each bind NAD(+). R83 and R89 together coordinate substrate. Residues N96 and 119-121 (LSN) each bind NAD(+). Substrate is bound by residues N121 and R152. H176 functions as the Proton acceptor in the catalytic mechanism.

The protein belongs to the LDH/MDH superfamily. MDH type 3 family.

The catalysed reaction is (S)-malate + NAD(+) = oxaloacetate + NADH + H(+). Catalyzes the reversible oxidation of malate to oxaloacetate. This chain is Malate dehydrogenase, found in Syntrophotalea carbinolica (strain DSM 2380 / NBRC 103641 / GraBd1) (Pelobacter carbinolicus).